The sequence spans 257 residues: MADS-box transcription factor 1 (257 aa).

The MADS-box domain occupies 1-61; it reads MGRGKVELKR…GRLFEFSSSS (61 aa). The K-box domain maps to 85–175; sequence NEINYQEYLK…RKKLQETSAE (91 aa).

May interact with the K-box of MADS6, MADS14 and MADS15.

It is found in the nucleus. In terms of biological role, probable transcription factor involved in the development of floral organs. Required for the formation of inner floral organs (lodicules, stamens and carpels, or whorls 2, 3 and 4) and the lemma and palea (whorl 1), which are grass floral organs analogous to sepals. May be involved in the control of flowering time. Seems to act as transcriptional activator. May act upstream of the auxin-responsive protein GH3.8. The sequence is that of MADS-box transcription factor 1 (MADS1) from Oryza sativa subsp. indica (Rice).